Here is a 674-residue protein sequence, read N- to C-terminus: MMDTDKDDLPSATDHSEHESGDAVKVEGGASKTASNSKDPSRPRRKKARRACFACQRAHLTCGDERPCQRCIKRGLQDACHDGVRKKAKYLHDAPDGALVPGAQGNFYNQANGLPKISPTEYTQNGTNNAQQQQQKSGTIYASSTPSYNNNNGTFDTNNATNTVLPDSAALNPGPFTATPASPTFSISTSSAMPSLTQPTNDMTSGAGQGSFGAFFDPSDPALFNFDLASMNFGNRYGALEFGMLGHMATGAGDTPPSDNGNQRGGSVGQRSNSQQFGNPPGAFTTESPSQQSFMFGDPVLNDWSGGQNTNPRMNVGSGLYGQGGGGGGGMHLLQQDAPHAYAIGSNTFASPSSTTSPHATTIAPSQFDDSPMKTKTVISTPHLRQQSLYNSNSNKRRHREPSAIYDSVKEPYSYTGGFHKLIAFIKRRFSPPKTVRIAKALASIRPSFIATTKTLNQDDLIFMEKCFQRTLWEYEDFINACGTPTIVCRRTGEVAAVGKEFSILTGWKKEVLLGKEPNLNVNTGGGNNTSSQSDSTSSSIRGGAGGRMRNQEPGPNNMAPVFLAELLDDDSVIEFYEDFARLAFGDSRGSVMNTCKLLKYKTKEDMDSVNADDSRWNSAMTHHIVGKGGIVGEAGMNRLGFKDGRVECSYCWTVKRDVFDIPMLIVMNFLPHI.

Residues Met-1 to Lys-46 form a disordered region. Positions Asp-14 to Lys-25 are enriched in basic and acidic residues. Residues Cys-52–Cys-80 constitute a DNA-binding region (zn(2)-C6 fungal-type). Disordered stretches follow at residues Ile-117–Ala-181, Thr-250–Tyr-321, Ile-344–Lys-374, and Asn-519–Asn-557. Residues Thr-120 to Tyr-148 show a composition bias toward polar residues. Positions Asn-149 to Thr-163 are enriched in low complexity. 2 stretches are compositionally biased toward polar residues: residues Gly-269–Gly-278 and Thr-285–Phe-294. Composition is skewed to low complexity over residues Thr-348–Ser-366 and Asn-529–Ser-540.

Belongs to the ERT1/acuK family.

The protein resides in the nucleus. Its function is as follows. Transcription factor which regulates nonfermentable carbon utilization. Activator of gluconeogenetic genes. In Talaromyces marneffei (strain ATCC 18224 / CBS 334.59 / QM 7333) (Penicillium marneffei), this protein is Transcription activator of gluconeogenesis PMAA_028970.